A 603-amino-acid chain; its full sequence is Adenine deaminase (603 aa).

This sequence belongs to the metallo-dependent hydrolases superfamily. Adenine deaminase family. Homodimer. Mn(2+) is required as a cofactor.

The catalysed reaction is adenine + H2O + H(+) = hypoxanthine + NH4(+). This chain is Adenine deaminase, found in Klebsiella pneumoniae subsp. pneumoniae (strain ATCC 700721 / MGH 78578).